The sequence spans 362 residues: 3-dehydroquinate synthase (362 aa).

NAD(+) contacts are provided by residues 71–76 (DGEQYK), 105–109 (GVVGD), 129–130 (TT), Lys142, Lys151, and 169–172 (CLKT). Residues Glu184, His247, and His264 each contribute to the Zn(2+) site.

Belongs to the sugar phosphate cyclases superfamily. Dehydroquinate synthase family. Requires Co(2+) as cofactor. Zn(2+) serves as cofactor. The cofactor is NAD(+).

The protein resides in the cytoplasm. The catalysed reaction is 7-phospho-2-dehydro-3-deoxy-D-arabino-heptonate = 3-dehydroquinate + phosphate. The protein operates within metabolic intermediate biosynthesis; chorismate biosynthesis; chorismate from D-erythrose 4-phosphate and phosphoenolpyruvate: step 2/7. Catalyzes the conversion of 3-deoxy-D-arabino-heptulosonate 7-phosphate (DAHP) to dehydroquinate (DHQ). The sequence is that of 3-dehydroquinate synthase from Shigella boydii serotype 18 (strain CDC 3083-94 / BS512).